The sequence spans 669 residues: MSDAQQITLLVDGEETKVTTGTTGAELFFERRDVVVARVNGELKDLDQELPEGAEVEGVTIESPDGLNVLRHSTAHVMAQAVQQLRPDAKLGIGPYITDGFYFDFDVAEPFTPEDLKTLEKMMQKIINQNQKFVRRVVSEDEAREAMKNEPYKLELLGKKNEAAEAGEGVNVEVGAGDITIYDNVERKEGTTVWCDLCRGPHLPNTKLISNAFALTRSSSAYWLGNQKNQQLQRIYGTAWPTKDALKAYQERIAEAERRDHRKLGSELDLFSFPDELGSGLPVFHPKGGIIRKEMEDYSRQRHVEAGYEFVYTPHITKGHLYEVSGHLDWYKEGMFPAMHVDAELNEDGTVRKPGQDYYLKPMNCPMHNLIFRSRGRSYRELPLRLFEFGSVYRYEKSGVVHGLTRVRGMTQDDAHIYCTREQMKEELTKTLTFVLDLLKDYGLNDFYLELSTKDPEKYVGEDAAWEEATRTLAEVAQESGLELVPDPGGAAFYGPKISVQAKDALGRTWQMSTIQLDFNLPERFELEFQAADGSRQRPVMIHRALFGSVERFMGVLTEHYAGAFPAWLAPVQVVGIPVAETFNEYMFDVVDQLKAAGIRAEVDTSSDRFPKKIRTASKDKIPFVLIAGGDDAEAGAVSFRFRDGSQDNGVPVAEAVKRITEAVRNRTS.

The TGS domain maps to 3-60; it reads DAQQITLLVDGEETKVTTGTTGAELFFERRDVVVARVNGELKDLDQELPEGAEVEGVT. Residues 260-566 form a catalytic region; the sequence is DHRKLGSELD…LTEHYAGAFP (307 aa). Positions 365, 416, and 543 each coordinate Zn(2+).

This sequence belongs to the class-II aminoacyl-tRNA synthetase family. Homodimer. It depends on Zn(2+) as a cofactor.

Its subcellular location is the cytoplasm. It catalyses the reaction tRNA(Thr) + L-threonine + ATP = L-threonyl-tRNA(Thr) + AMP + diphosphate + H(+). Its function is as follows. Catalyzes the attachment of threonine to tRNA(Thr) in a two-step reaction: L-threonine is first activated by ATP to form Thr-AMP and then transferred to the acceptor end of tRNA(Thr). Also edits incorrectly charged L-seryl-tRNA(Thr). The protein is Threonine--tRNA ligase of Pseudarthrobacter chlorophenolicus (strain ATCC 700700 / DSM 12829 / CIP 107037 / JCM 12360 / KCTC 9906 / NCIMB 13794 / A6) (Arthrobacter chlorophenolicus).